Consider the following 829-residue polypeptide: Periplasmic nitrate reductase (829 aa).

Residues 1-30 (MKLSRRDFMKANAVAAAAAVAGVSAPTLAA) constitute a signal peptide (tat-type signal). Residues 41–97 (ITWDKAPCRFCGTGCSVLVGSQDGRVVATQGDPDAPVNRGLNCIKGYFLSKIMYGQD) enclose the 4Fe-4S Mo/W bis-MGD-type domain. 4 residues coordinate [4Fe-4S] cluster: cysteine 48, cysteine 51, cysteine 55, and cysteine 83. Mo-bis(molybdopterin guanine dinucleotide) is bound by residues lysine 85, glutamine 152, asparagine 177, cysteine 181, 214–221 (WGSNMAEM), 245–249 (STFEH), 264–266 (QTD), methionine 374, glutamine 378, asparagine 484, 510–511 (SD), lysine 533, aspartate 560, and 719–728 (TGRVLEHWHT). Phenylalanine 795 contributes to the substrate binding site. Mo-bis(molybdopterin guanine dinucleotide)-binding residues include asparagine 803 and lysine 820.

This sequence belongs to the prokaryotic molybdopterin-containing oxidoreductase family. NasA/NapA/NarB subfamily. In terms of assembly, component of the periplasmic nitrate reductase NapAB complex composed of NapA and NapB. Requires [4Fe-4S] cluster as cofactor. It depends on Mo-bis(molybdopterin guanine dinucleotide) as a cofactor. Post-translationally, predicted to be exported by the Tat system. The position of the signal peptide cleavage has not been experimentally proven.

The protein localises to the periplasm. It catalyses the reaction 2 Fe(II)-[cytochrome] + nitrate + 2 H(+) = 2 Fe(III)-[cytochrome] + nitrite + H2O. Functionally, catalytic subunit of the periplasmic nitrate reductase complex NapAB. Receives electrons from NapB and catalyzes the reduction of nitrate to nitrite. This is Periplasmic nitrate reductase from Aeromonas hydrophila subsp. hydrophila (strain ATCC 7966 / DSM 30187 / BCRC 13018 / CCUG 14551 / JCM 1027 / KCTC 2358 / NCIMB 9240 / NCTC 8049).